The chain runs to 231 residues: 2-C-methyl-D-erythritol 4-phosphate cytidylyltransferase (231 aa).

Belongs to the IspD/TarI cytidylyltransferase family. IspD subfamily.

It catalyses the reaction 2-C-methyl-D-erythritol 4-phosphate + CTP + H(+) = 4-CDP-2-C-methyl-D-erythritol + diphosphate. The protein operates within isoprenoid biosynthesis; isopentenyl diphosphate biosynthesis via DXP pathway; isopentenyl diphosphate from 1-deoxy-D-xylulose 5-phosphate: step 2/6. Its function is as follows. Catalyzes the formation of 4-diphosphocytidyl-2-C-methyl-D-erythritol from CTP and 2-C-methyl-D-erythritol 4-phosphate (MEP). The chain is 2-C-methyl-D-erythritol 4-phosphate cytidylyltransferase from Lysinibacillus sphaericus (strain C3-41).